Reading from the N-terminus, the 513-residue chain is Serine/threonine-protein kinase PBL27 (513 aa).

Residues Met-1–Gly-61 are disordered. 2 S-palmitoyl cysteine lipidation sites follow: Cys-4 and Cys-7. Basic and acidic residues-rich tracts occupy residues Ala-15–Ala-27 and Ile-38–Ala-57. A Protein kinase domain is found at Phe-83–Leu-360. Residues Leu-89–Val-97 and Lys-112 each bind ATP. The active-site Proton acceptor is the Asp-210. Residue Ser-244 is modified to Phosphoserine; by CERK1. Phosphothreonine; by CERK1 is present on residues Thr-245 and Thr-250. Residues Phe-365 to Gly-378 are compositionally biased toward polar residues. The interval Phe-365–Asp-513 is disordered. A phosphoserine mark is found at Ser-392 and Ser-401. Basic and acidic residues predominate over residues Asn-417–Arg-428. The segment covering Ser-434–Arg-446 has biased composition (gly residues). Residues Gln-456–Thr-473 are compositionally biased toward polar residues. The span at Arg-475–Ala-486 shows a compositional bias: basic and acidic residues. Residues Gly-504–Asp-513 show a composition bias toward polar residues.

It belongs to the protein kinase superfamily. Ser/Thr protein kinase family. As to quaternary structure, interacts with CERK1 (preferentially unphosphorylated) at the plasma membrane. Binds to MAPKKK5 at the plasma membrane; disassociation is induced by chitin perception by the CERK1 complex. Also associates with MAPKKK3. In terms of processing, phosphorylated by CERK1 upon elicitation by chitin. Palmitoylation at Cys-4 and Cys-7 are required for plasma membrane location.

It is found in the cell membrane. It carries out the reaction L-seryl-[protein] + ATP = O-phospho-L-seryl-[protein] + ADP + H(+). It catalyses the reaction L-threonyl-[protein] + ATP = O-phospho-L-threonyl-[protein] + ADP + H(+). In terms of biological role, receptor-like cytoplasmic kinase involved in the transduction of signal between the host cell surface chitin receptor complex CERK1-LYK5 and the intracellular MAPKKK5-dependent mitogen-activated protein kinase (MAPK) cascade that leads to chitin-induced immunity. Phosphorylates and activates MAPKKK5 when phosphorylated by CERK1 after elicitation by chitin. This Arabidopsis thaliana (Mouse-ear cress) protein is Serine/threonine-protein kinase PBL27.